A 435-amino-acid chain; its full sequence is Zinc finger CCCH domain-containing protein 10 (435 aa).

The segment at 1–36 (MPDRDSYANGTGSSGGGPGGGGSEEASGAGTGSGGA) is disordered. Positions 12 to 35 (GSSGGGPGGGGSEEASGAGTGSGG) are enriched in gly residues. C3H1-type zinc fingers lie at residues 36–63 (ATSD…HPDM), 73–99 (KNEF…HGSK), and 134–161 (KEEV…HLQR). The interval 166 to 190 (DARGGGGTGGGGSTGSAPPGRRHDL) is disordered. Residues 168–179 (RGGGGTGGGGST) show a composition bias toward gly residues. Omega-N-methylarginine is present on residues Arg-186 and Arg-187. The stretch at 235 to 281 (GVECRLLEEENALLRKRVEELKKQVSNLLATNEVLLEQNAQFRNQAK) forms a coiled coil. Polar residues predominate over residues 315 to 331 (TTLSSQALQPRPVSQQE). The tract at residues 315 to 363 (TTLSSQALQPRPVSQQELVAPTGAPAAPPTNAAPPAAPPPPPPHLNPEI) is disordered. A compositionally biased stretch (pro residues) spans 340–359 (AAPPTNAAPPAAPPPPPPHL).

The protein localises to the nucleus. Its function is as follows. Specific regulator of miRNA biogenesis. Binds, via the C3H1-type zinc finger domains, to the binding motif 5'-GCAGCGC-3' on microRNA pri-MIR143 and negatively regulates the processing to mature microRNA. The sequence is that of Zinc finger CCCH domain-containing protein 10 (Zc3h10) from Mus musculus (Mouse).